The chain runs to 258 residues: Lipoprotein-releasing system ATP-binding protein LolD (258 aa).

Residues 5 to 244 (LQCCQLSKSY…PTSSITDPAN (240 aa)) enclose the ABC transporter domain. Residue 41–48 (GSSGCGKS) participates in ATP binding. The interval 222 to 258 (LRPLSDNSEQALPPTSSITDPANNIKDNEPQANERHV) is disordered. A compositionally biased stretch (polar residues) spans 226-243 (SDNSEQALPPTSSITDPA). Over residues 247-258 (KDNEPQANERHV) the composition is skewed to basic and acidic residues.

Belongs to the ABC transporter superfamily. Lipoprotein translocase (TC 3.A.1.125) family. In terms of assembly, the complex is composed of two ATP-binding proteins (LolD) and two transmembrane proteins (LolC and LolE).

The protein resides in the cell inner membrane. Functionally, part of the ABC transporter complex LolCDE involved in the translocation of mature outer membrane-directed lipoproteins, from the inner membrane to the periplasmic chaperone, LolA. Responsible for the formation of the LolA-lipoprotein complex in an ATP-dependent manner. The polypeptide is Lipoprotein-releasing system ATP-binding protein LolD (Colwellia psychrerythraea (strain 34H / ATCC BAA-681) (Vibrio psychroerythus)).